Here is a 295-residue protein sequence, read N- to C-terminus: Energy-coupling factor transporter ATP-binding protein EcfA2 (295 aa).

The 244-residue stretch at isoleucine 3 to glycine 246 folds into the ABC transporter domain. Glycine 40–serine 47 contributes to the ATP binding site.

Belongs to the ABC transporter superfamily. Energy-coupling factor EcfA family. Forms a stable energy-coupling factor (ECF) transporter complex composed of 2 membrane-embedded substrate-binding proteins (S component), 2 ATP-binding proteins (A component) and 2 transmembrane proteins (T component).

The protein resides in the cell membrane. In terms of biological role, ATP-binding (A) component of a common energy-coupling factor (ECF) ABC-transporter complex. Unlike classic ABC transporters this ECF transporter provides the energy necessary to transport a number of different substrates. In Lactiplantibacillus plantarum (strain ATCC BAA-793 / NCIMB 8826 / WCFS1) (Lactobacillus plantarum), this protein is Energy-coupling factor transporter ATP-binding protein EcfA2.